The primary structure comprises 85 residues: UPF0213 protein NP_0776A (85 aa).

The region spanning A3 to R78 is the GIY-YIG domain. A compositionally biased stretch (basic and acidic residues) spans K58–S70. The tract at residues K58–G85 is disordered.

This sequence belongs to the UPF0213 family.

The sequence is that of UPF0213 protein NP_0776A from Natronomonas pharaonis (strain ATCC 35678 / DSM 2160 / CIP 103997 / JCM 8858 / NBRC 14720 / NCIMB 2260 / Gabara) (Halobacterium pharaonis).